Consider the following 141-residue polypeptide: Venom protein family 1 protein 1 (141 aa).

An N-terminal signal peptide occupies residues 1–17 (MKSFIVVLCCLFAITYG). The cysteines at positions 62 and 139 are disulfide-linked.

Belongs to the insect vpf1 family. Expressed by the venom gland (posterior main gland) (at protein level).

The protein resides in the secreted. The sequence is that of Venom protein family 1 protein 1 from Platymeris rhadamanthus (Red spot assassin bug).